A 234-amino-acid polypeptide reads, in one-letter code: Large ribosomal subunit protein uL1 (234 aa).

Belongs to the universal ribosomal protein uL1 family. Part of the 50S ribosomal subunit.

Its function is as follows. Binds directly to 23S rRNA. The L1 stalk is quite mobile in the ribosome, and is involved in E site tRNA release. Protein L1 is also a translational repressor protein, it controls the translation of the L11 operon by binding to its mRNA. The sequence is that of Large ribosomal subunit protein uL1 from Tolumonas auensis (strain DSM 9187 / NBRC 110442 / TA 4).